Reading from the N-terminus, the 213-residue chain is Chloramphenicol acetyltransferase 2 (213 aa).

Residue histidine 189 is the Proton acceptor of the active site.

It belongs to the chloramphenicol acetyltransferase family. Homotrimer.

It carries out the reaction chloramphenicol + acetyl-CoA = chloramphenicol 3-acetate + CoA. In terms of biological role, this enzyme is an effector of chloramphenicol resistance in bacteria. The polypeptide is Chloramphenicol acetyltransferase 2 (cat-IIH) (Haemophilus influenzae).